Here is a 778-residue protein sequence, read N- to C-terminus: Subtilisin-like protease SBT5.4 (778 aa).

An N-terminal signal peptide occupies residues 1–35 (MSMTRRYSSTQYSNKMSLQSLSSLLLLVTLFFSPA). The 86-residue stretch at 41 to 126 (SYIVYLGSHA…VFPNKGRKLH (86 aa)) folds into the Inhibitor I9 domain. In terms of domain architecture, Peptidase S8 spans 130 to 634 (SWNFMLLAKN…SGHVQPNKAA (505 aa)). Asp-163 functions as the Charge relay system in the catalytic mechanism. N-linked (GlcNAc...) asparagine glycosylation occurs at Asn-218. The active-site Charge relay system is the His-230. Asn-253 and Asn-404 each carry an N-linked (GlcNAc...) asparagine glycan. Positions 401–486 (ANGNVTDALL…KDGETLFSYL (86 aa)) constitute a PA domain. Ser-567 (charge relay system) is an active-site residue. N-linked (GlcNAc...) asparagine glycosylation is found at Asn-657, Asn-690, and Asn-732.

Belongs to the peptidase S8 family. Expressed in the vasculature of roots and leaves, stomata, sepals, stigma, anthers and siliques.

It is found in the endoplasmic reticulum. It localises to the cell membrane. Functionally, serine protease. Has a substrate preference for the hydrophobic residues Phe and Ala and the basic residue Asp in the P1 position, and for Asp, Leu or Ala in the P1' position. Interferes with CLAVATA 3 (CLV3) signaling, but does not cleave CLV3. This chain is Subtilisin-like protease SBT5.4, found in Arabidopsis thaliana (Mouse-ear cress).